Reading from the N-terminus, the 486-residue chain is MTTFYTVVSWLVILGYWVLIAGVTLRILMKRRAVPSAMAWLLIIYILPLVGIIAYLSVGELHLGKRRAERARAMWPSTAKWLNDLKACKHIFAQENSSVASSLFKLCERRQGIAGVKGNQLQLLTDSDDVMQALIRDIQLARHNIEMVFYIWQPGGMADQVAESLMAAARRGIHCRLMLDSAGSVAFFRSPWAAMMRNAGIEVVEALKVNLMRVFLRRMDLRQHRKMVMIDNYIAYTGSMNMVDPRFFKQDAGVGQWVDLMARMEGPVATAMGIVYSCDWEIETGKRILPPPPDVNIMPFEQASGHTIHTIASGPGFPEDLIHQALLTATYAAREYLIMTTPYFVPSDDLLHAICTAAQRGVDVSIILPRKNDSLLVGWASRAFFSELLAAGVKIYQFEGGLLHTKSVLVDGELSLVGTVNLDMRSLWLNFEITLVIDDTGFGADLAAVQDDYISRSRLLDARLWVKRPLWQRITERLFYFFSPLL.

Transmembrane regions (helical) follow at residues 3–23 (TFYT…IAGV) and 38–58 (MAWL…YLSV). PLD phosphodiesterase domains are found at residues 219 to 246 (MDLR…VDPR) and 399 to 426 (EGGL…DMRS). Catalysis depends on residues H224, K226, D231, H404, K406, and D411.

Belongs to the phospholipase D family. Cardiolipin synthase subfamily. ClsA sub-subfamily.

The protein localises to the cell inner membrane. The catalysed reaction is 2 a 1,2-diacyl-sn-glycero-3-phospho-(1'-sn-glycerol) = a cardiolipin + glycerol. Catalyzes the reversible phosphatidyl group transfer from one phosphatidylglycerol molecule to another to form cardiolipin (CL) (diphosphatidylglycerol) and glycerol. The sequence is that of Cardiolipin synthase A from Salmonella choleraesuis (strain SC-B67).